Consider the following 148-residue polypeptide: Cysteine-rich venom protein VAR6 (148 aa).

An N-terminal signal peptide occupies residues 1–22; that stretch reads MILLKLYLTLAAILCQSRGTTS. One can recognise an SCP domain in the interval 41 to 140; sequence NKHNDLRRTV…AGVMVGHYTQ (100 aa).

Belongs to the CRISP family. Post-translationally, contains 8 disulfide bonds. Expressed by the venom gland.

It localises to the secreted. In terms of biological role, blocks ryanodine receptors, and potassium channels. This is Cysteine-rich venom protein VAR6 from Varanus acanthurus (Ridge-tailed monitor).